We begin with the raw amino-acid sequence, 346 residues long: Phosphoribosylformylglycinamidine cyclo-ligase (346 aa).

It belongs to the AIR synthase family.

The protein resides in the cytoplasm. It carries out the reaction 2-formamido-N(1)-(5-O-phospho-beta-D-ribosyl)acetamidine + ATP = 5-amino-1-(5-phospho-beta-D-ribosyl)imidazole + ADP + phosphate + H(+). It functions in the pathway purine metabolism; IMP biosynthesis via de novo pathway; 5-amino-1-(5-phospho-D-ribosyl)imidazole from N(2)-formyl-N(1)-(5-phospho-D-ribosyl)glycinamide: step 2/2. This is Phosphoribosylformylglycinamidine cyclo-ligase from Bacillus pumilus (strain SAFR-032).